The chain runs to 226 residues: ATP-dependent dethiobiotin synthetase BioD (226 aa).

Residue 12-17 participates in ATP binding; that stretch reads EVGKTV. Residue Thr-16 participates in Mg(2+) binding. Lys-39 is an active-site residue. Thr-43 is a substrate binding site. ATP-binding positions include Asp-47, 108 to 111, 168 to 169, and 200 to 202; these read EALG, NC, and PYI. Mg(2+)-binding residues include Asp-47 and Glu-108.

Belongs to the dethiobiotin synthetase family. Homodimer. Requires Mg(2+) as cofactor.

It localises to the cytoplasm. It catalyses the reaction (7R,8S)-7,8-diammoniononanoate + CO2 + ATP = (4R,5S)-dethiobiotin + ADP + phosphate + 3 H(+). The enzyme catalyses (7R,8S)-8-amino-7-(carboxyamino)nonanoate + ATP = (4R,5S)-dethiobiotin + ADP + phosphate + H(+). Its pathway is cofactor biosynthesis; biotin biosynthesis; biotin from 7,8-diaminononanoate: step 1/2. In terms of biological role, catalyzes a mechanistically unusual reaction, the ATP-dependent insertion of CO2 between the N7 and N8 nitrogen atoms of 7,8-diaminopelargonic acid (DAPA, also called 7,8-diammoniononanoate) to form a ureido ring. This cyanobacterium does not encode bioA (which catalyzes the formation of the precursor for this reaction in the cannonical pathway), instead it encodes bioU, which replaces bioA and also performs the first half of the cannonical BioD reaction. Thus in this organism BioD has a different substrate. In Gloeothece citriformis (strain PCC 7424) (Cyanothece sp. (strain PCC 7424)), this protein is ATP-dependent dethiobiotin synthetase BioD.